Consider the following 412-residue polypeptide: Protein arginine N-methyltransferase 2 (412 aa).

Basic and acidic residues predominate over residues 48–65 (EKNRNGDKEFRESTDDNK). Disordered regions lie at residues 48–69 (EKNR…TSNT) and 169–189 (SVQT…DDAT). A phosphoserine mark is found at Ser-181 and Ser-184. An RMT2 domain is found at 189–412 (TAANQQVYLK…YYYHPRITFA (224 aa)). S-adenosyl-L-methionine contacts are provided by residues Tyr-196, Met-226, 250–255 (FGMGII), 271–273 (EAH), 298–299 (WQ), and Asp-319.

Belongs to the class I-like SAM-binding methyltransferase superfamily. RMT2 methyltransferase family. Monomer. Interacts with nucleoporins NUP49, NUP57 and NUP100.

It localises to the cytoplasm. The protein localises to the nucleus. Functionally, S-adenosyl-L-methionine-dependent protein-arginine N-methyltransferase that methylates the delta-nitrogen atom of arginine residues to form N5-methylarginine (type IV) in target proteins. Monomethylates ribosomal protein L12 (RPL12A/RPL12B) at 'Arg-67'. This is Protein arginine N-methyltransferase 2 from Saccharomyces cerevisiae (strain ATCC 204508 / S288c) (Baker's yeast).